The following is a 91-amino-acid chain: Probable Fe(2+)-trafficking protein (91 aa).

This sequence belongs to the Fe(2+)-trafficking protein family.

In terms of biological role, could be a mediator in iron transactions between iron acquisition and iron-requiring processes, such as synthesis and/or repair of Fe-S clusters in biosynthetic enzymes. The sequence is that of Probable Fe(2+)-trafficking protein from Mannheimia succiniciproducens (strain KCTC 0769BP / MBEL55E).